The chain runs to 196 residues: FMN-dependent NADH:quinone oxidoreductase (196 aa).

Residues Ser-10, 16 to 18 (SQS), 93 to 96 (MYNF), and 137 to 140 (TRGG) contribute to the FMN site.

The protein belongs to the azoreductase type 1 family. As to quaternary structure, homodimer. The cofactor is FMN.

The enzyme catalyses 2 a quinone + NADH + H(+) = 2 a 1,4-benzosemiquinone + NAD(+). The catalysed reaction is N,N-dimethyl-1,4-phenylenediamine + anthranilate + 2 NAD(+) = 2-(4-dimethylaminophenyl)diazenylbenzoate + 2 NADH + 2 H(+). Functionally, quinone reductase that provides resistance to thiol-specific stress caused by electrophilic quinones. In terms of biological role, also exhibits azoreductase activity. Catalyzes the reductive cleavage of the azo bond in aromatic azo compounds to the corresponding amines. This chain is FMN-dependent NADH:quinone oxidoreductase, found in Shewanella amazonensis (strain ATCC BAA-1098 / SB2B).